The following is a 706-amino-acid chain: MKRCKSDELQQQQGEEDGAGMEDAACLLPGADLRHGEASSANSAGGPTSDAGAAVAPNPGPRSKPPDLKKIQQLSEGSMFGHGLKHLFHSRRRSREREHQASQEAQQQQQQQGLSDQDSPDEKERSPEMHRVSYAVSLHDLPARPTAFNRVLQQIRSRPSIKRGASLHSSGGSGGRRAKSSSLEPQRGSPHLLRKAPQDSSLAAILHQHQGRPRSSSTTDTALLLADGSSAYLLAEEAESIGDKGDKGDLVALSLPSGPGHGDSDGPISLDVPDGAPDPQRTKAAIEHLHQKILKITEQIKIEQEARDDNVAEYLKLANNADKQQVSRIKQVFEKKNQKSAQTIAQLHKKLEHYRRRLKEIEQNGPSRQPKDVLRDMQQGLKDVGANMRAGISGFGGGVVEGVKGSLSGLSQATHTAVVSKPREFASLIRNKFGSADNIAHLKDPMEDGPPEEAARALSGSATLVSSPKYGSDDECSSASASSAGAGSNSGAGPGGALGSPRSNTLYGAPGNLDTLLEELREIKEGQSHLEDSMEDLKTQLQRDYTYMTQCLQEERYRYERLEEQLNDLTELHQNEMTNLKQELASMEEKVAYQSYERARDIQEAVESCLTRVTKLELQQQQQQVVQLEGVENANARALLGKFINVILALMAVLLVFVSTIANFITPLMKTRLRITSTALLLLVLFLLWKHWASLTYLLEHVLLPS.

Disordered regions lie at residues 1–221 (MKRC…TTDT) and 251–280 (VALS…PDPQ). Residue serine 6 is modified to Phosphoserine. Positions 83-94 (GLKHLFHSRRRS) are enriched in basic residues. A compositionally biased stretch (low complexity) spans 102–112 (SQEAQQQQQQQ). Residues 120–131 (PDEKERSPEMHR) are compositionally biased toward basic and acidic residues. Arginine 163 bears the Omega-N-methylarginine mark. Residues 330–365 (KQVFEKKNQKSAQTIAQLHKKLEHYRRRLKEIEQNG) adopt a coiled-coil conformation. Serine 435 is subject to Phosphoserine. Residues 440–459 (AHLKDPMEDGPPEEAARALS) are disordered. Residues serine 461 and serine 467 each carry the phosphoserine modification. A disordered region spans residues 464-510 (LVSSPKYGSDDECSSASASSAGAGSNSGAGPGGALGSPRSNTLYGAP). The segment covering 477 to 487 (SSASASSAGAG) has biased composition (low complexity). Positions 488-498 (SNSGAGPGGAL) are enriched in gly residues. Serine 500 carries the phosphoserine modification. Positions 511-630 (GNLDTLLEEL…QQQQVVQLEG (120 aa)) form a coiled coil. A run of 2 helical transmembrane segments spans residues 646 to 666 (VILA…NFIT) and 679 to 699 (ALLL…TYLL).

It belongs to the TEX28 family. May form homodimers and heterodimers with TMCC2 or TMCC3 via the coiled-coil domains. Interacts with ribosomal proteins RPL4 and RPS6. Interacts with APOE and proteolytic processed C-terminal fragment C99 of the amyloid precursor protein (APP C99).

The protein resides in the endoplasmic reticulum membrane. In terms of biological role, may be involved in the regulation of the proteolytic processing of the amyloid precursor protein (APP) possibly also implicating APOE. The chain is Transmembrane and coiled-coil domains protein 2 from Mus musculus (Mouse).